A 67-amino-acid polypeptide reads, in one-letter code: MPKMKTKSSAKKRFRVRPGGTVKRGQAFKRHILTKKTTKNKRHLRGAVSVHETNMGSIAQMLPMAGL.

Residues 1 to 16 (MPKMKTKSSAKKRFRV) show a composition bias toward basic residues. The segment at 1-24 (MPKMKTKSSAKKRFRVRPGGTVKR) is disordered.

Belongs to the bacterial ribosomal protein bL35 family.

This is Large ribosomal subunit protein bL35 from Delftia acidovorans (strain DSM 14801 / SPH-1).